The following is a 484-amino-acid chain: UDP-glycosyltransferase 73B4 (484 aa).

Histidine 18 serves as the catalytic Proton acceptor. Residues histidine 18 and asparagine 89 each coordinate an anthocyanidin. The Charge relay role is filled by aspartate 129. Residues alanine 356, glutamine 358, histidine 373, tryptophan 376, asparagine 377, serine 378, and glutamate 381 each coordinate UDP-alpha-D-glucose. Alanine 396 lines the an anthocyanidin pocket. Positions 397 and 398 each coordinate UDP-alpha-D-glucose.

It belongs to the UDP-glycosyltransferase family. Specifically expressed in roots.

The catalysed reaction is a flavonol + UDP-alpha-D-glucose = a flavonol 3-O-beta-D-glucoside + UDP + H(+). Its function is as follows. Possesses quercetin 3-O-glucosyltransferase and low 7-O-glucosyltransferase activities in vitro. Also active in vitro on benzoates and benzoate derivatives. Can detoxify the explosive 2,4,6-trinitrotoluene in plant by forming O- or C-glucose conjugates. The protein is UDP-glycosyltransferase 73B4 (UGT73B4) of Arabidopsis thaliana (Mouse-ear cress).